Here is a 403-residue protein sequence, read N- to C-terminus: MSILKLVKGVLYGEGEHHEKPKKTHIVIIGAGLTGLLLAQGLRKLNARLEAEGQSAPFTFSIHERDESSFYRGGGFSLTIHWALQQLYDILPEELSARIFECVGNPDAIKNGQMGSFTFLNLRTGEPALKTTIPPGWKGARMSRVRFLQLLMTDLDIHYSHRLSQITFPTDNTVRAHFENGDQETGNLLIGADGANSVVRRFVYGAENSKNTQLPIRMLNCRSEYPLEELEACLRVDPHLFHAGDPVQDGYFMFAFLDMPPAGSKNGKAGVQLTISWPYESGYLGQEAPSDPPTELPEQLAWLKHMAKHWANPVHDLIYGMPDDSIVRVIRVQEWMPNDANRRPTDGRITTVGDAAHLMTSFRGENANHGVVDVAKLLALLAPSGNKPTDLREVPVPVSTDDA.

FAD contacts are provided by Gly-75, Arg-144, Asp-354, and Ala-367.

The protein belongs to the paxM FAD-dependent monooxygenase family. It depends on FAD as a cofactor.

It participates in secondary metabolite biosynthesis. FAD-dependent monooxygenase; part of the gene cluster that mediates the biosynthesis of azaterrilone A and other azaphilones, a class of fungal metabolites characterized by a highly oxygenated pyrano-quinone bicyclic core and exhibiting a broad range of bioactivities. The first step of the pathway begins with the non-reducing polyketide synthase tazA that assembles one acetyl-CoA starter unit, five malonyl-CoA units, and catalyzes a series of Claisen condensations, methylation, PT-mediated cyclization, and finally releases the first hexaketide precursor through the R-domain. The tazA product then undergoes reduction on its terminal ketone and the following pyran-ring formation by yet undetermined enzyme(s). Dehydration and enoyl reduction, possibly involving the trans-enoyl reductase tazE leads to the next intermediate. TazD is predicted as an acetyltransferase and might catalyze the acetylation steps leading to the synthesis of azaterrilone A. Azaterrilone A is not the final product of the taz pathway and both the highly reducing polyketide synthase tazB and the dual enzyme tazHJ catalyze late steps of the pathway, leading to the production of the 2 final stereoisomers that contain additional polyketide modification whose structures have still to be determined. In Aspergillus terreus (strain NIH 2624 / FGSC A1156), this protein is FAD-dependent monooxygenase tazP.